The following is a 166-amino-acid chain: Emerin homolog 1 (166 aa).

Residues M1–S44 enclose the LEM domain. Topologically, residues M1–L127 are nuclear. The segment at I62–E99 is disordered. The chain crosses the membrane as a helical span at residues G128–I148. The Perinuclear space segment spans residues E149 to I166.

In terms of assembly, interacts with lmn-1 and baf-1. As to expression, ubiquitous. Expressed in all cells, except in cells undergoing spermatogenesis. High expression in hypodermis, neurons, pharyngeal muscle, body wall muscle and gonadal sheath.

It localises to the nucleus inner membrane. The protein localises to the nucleus envelope. Nuclear lamina-associated inner nuclear membrane protein that is involved in cell division, nuclear structure organization, maintenance of nuclear envelope integrity and nuclear envelope reformation after mitosis. Involved in chromosome segregation and cell division, probably via its interaction with the nuclear intermediate filament protein lmn-1, the main component of nuclear lamina. Required to organize the distribution of lmn-1, nuclear pore complexes (NPCs) and chromatin in mitotically active cells. Together with lem-2, plays a role in baf-1 enrichment at the nuclear envelope in anaphase. Together with lem-2, involved in muscle cell attachment to hypodermal cells, as well as muscle cell location and sarcomere organization. May play a role in radiation-induced DNA damage repair response. May repress binding of transcription factor pha-4 with target sequences in pharyngeal cells. This chain is Emerin homolog 1 (emr-1), found in Caenorhabditis elegans.